A 288-amino-acid polypeptide reads, in one-letter code: PAK4-inhibitor inka2 (288 aa).

Residues 159-196 form an inka box region; sequence DPTDWTTSLLTRGRNRQPLVLGDNSFADLIKNWMDLPE.

This sequence belongs to the INKA family.

It localises to the nucleus. In terms of biological role, inhibitor of the serine/threonine-protein kinase pak4/pak5. Acts by binding pak4/pak5 in a substrate-like manner, inhibiting the protein kinase activity. In Danio rerio (Zebrafish), this protein is PAK4-inhibitor inka2.